Reading from the N-terminus, the 249-residue chain is MIKILVSNDDGITAPGIAALSNALAKHYEVMTVGPDRNCSGASNSLTLTNPLRINKLDNGYISVSGTPTDCVHLAIREFYAHEPDIVVSGINAGANMGDDTLYSGTVAAAMEGRFLGLPAIAISLVGRELKHYDTAAYYACKIVAGLIDSPIASDQILNVNVPNLPLDEIKGIRVTRLGARHRAEGMVRMQDPAGREIFWLGPPGEEQDASEGTDFHAVANGYVSVTPLTVDLTAFEQVPKIKQWIEQL.

The a divalent metal cation site is built by Asp-9, Asp-10, Ser-40, and Asn-92.

It belongs to the SurE nucleotidase family. Requires a divalent metal cation as cofactor.

It localises to the cytoplasm. It carries out the reaction a ribonucleoside 5'-phosphate + H2O = a ribonucleoside + phosphate. Nucleotidase that shows phosphatase activity on nucleoside 5'-monophosphates. This chain is 5'-nucleotidase SurE, found in Shewanella loihica (strain ATCC BAA-1088 / PV-4).